A 264-amino-acid polypeptide reads, in one-letter code: ATP synthase subunit a (264 aa).

The next 6 helical transmembrane spans lie at Thr-29 to Phe-49, Asn-87 to Met-107, Asp-134 to Ile-154, Ile-177 to Leu-197, Leu-208 to Val-228, and Leu-235 to Val-255.

This sequence belongs to the ATPase A chain family. As to quaternary structure, F-type ATPases have 2 components, CF(1) - the catalytic core - and CF(0) - the membrane proton channel. CF(1) has five subunits: alpha(3), beta(3), gamma(1), delta(1), epsilon(1). CF(0) has three main subunits: a(1), b(2) and c(9-12). The alpha and beta chains form an alternating ring which encloses part of the gamma chain. CF(1) is attached to CF(0) by a central stalk formed by the gamma and epsilon chains, while a peripheral stalk is formed by the delta and b chains.

The protein localises to the cell inner membrane. Functionally, key component of the proton channel; it plays a direct role in the translocation of protons across the membrane. The polypeptide is ATP synthase subunit a (Shewanella amazonensis (strain ATCC BAA-1098 / SB2B)).